The sequence spans 481 residues: Phospho-2-dehydro-3-deoxyheptonate aldolase (481 aa).

The tract at residues 1–22 (MSQQTTPNAPGWAPDSWRSKPI) is disordered.

It belongs to the class-II DAHP synthase family. Homodimer. Post-translationally, the N-terminus is blocked.

It carries out the reaction D-erythrose 4-phosphate + phosphoenolpyruvate + H2O = 7-phospho-2-dehydro-3-deoxy-D-arabino-heptonate + phosphate. Its pathway is metabolic intermediate biosynthesis; chorismate biosynthesis; chorismate from D-erythrose 4-phosphate and phosphoenolpyruvate: step 1/7. In Neurospora crassa (strain ATCC 24698 / 74-OR23-1A / CBS 708.71 / DSM 1257 / FGSC 987), this protein is Phospho-2-dehydro-3-deoxyheptonate aldolase (aro-8).